The chain runs to 160 residues: Cytochrome b6-f complex subunit 4 (160 aa).

The next 3 membrane-spanning stretches (helical) occupy residues 36–56 (LLYIFPVVILGTIACVVGLAV), 95–115 (LLGIALQTLIPLGLMILPFIE), and 131–151 (VVFLFGTFLTIYLGIGACLPI).

Belongs to the cytochrome b family. PetD subfamily. As to quaternary structure, the 4 large subunits of the cytochrome b6-f complex are cytochrome b6, subunit IV (17 kDa polypeptide, PetD), cytochrome f and the Rieske protein, while the 4 small subunits are PetG, PetL, PetM and PetN. The complex functions as a dimer.

The protein resides in the cellular thylakoid membrane. Component of the cytochrome b6-f complex, which mediates electron transfer between photosystem II (PSII) and photosystem I (PSI), cyclic electron flow around PSI, and state transitions. The sequence is that of Cytochrome b6-f complex subunit 4 from Prochlorococcus marinus (strain MIT 9515).